Consider the following 216-residue polypeptide: Ribosomal RNA small subunit methyltransferase G (216 aa).

S-adenosyl-L-methionine-binding positions include Gly81, Leu86, 132–133 (VE), and Arg147.

The protein belongs to the methyltransferase superfamily. RNA methyltransferase RsmG family.

The protein resides in the cytoplasm. The enzyme catalyses guanosine(527) in 16S rRNA + S-adenosyl-L-methionine = N(7)-methylguanosine(527) in 16S rRNA + S-adenosyl-L-homocysteine. Its function is as follows. Specifically methylates the N7 position of guanine in position 527 of 16S rRNA. The protein is Ribosomal RNA small subunit methyltransferase G of Hydrogenovibrio crunogenus (strain DSM 25203 / XCL-2) (Thiomicrospira crunogena).